The chain runs to 107 residues: Transcription initiation factor IIA subunit 2-2 (107 aa).

The protein belongs to the TFIIA subunit 2 family. In terms of assembly, TFIIA is a heterodimer of the large unprocessed subunit 1 and a small subunit gamma. It was originally believed to be a heterotrimer of an alpha (p30), a beta (p20) and a gamma (p14) subunit.

It is found in the nucleus. Its function is as follows. TFIIA is a component of the transcription machinery of RNA polymerase II and plays an important role in transcriptional activation. TFIIA in a complex with TBP mediates transcriptional activity. The chain is Transcription initiation factor IIA subunit 2-2 (TfIIA-S-2) from Drosophila melanogaster (Fruit fly).